We begin with the raw amino-acid sequence, 219 residues long: Large ribosomal subunit protein uL3 (219 aa).

At Gln151 the chain carries N5-methylglutamine.

This sequence belongs to the universal ribosomal protein uL3 family. Part of the 50S ribosomal subunit. Forms a cluster with proteins L14 and L19. In terms of processing, methylated by PrmB.

Its function is as follows. One of the primary rRNA binding proteins, it binds directly near the 3'-end of the 23S rRNA, where it nucleates assembly of the 50S subunit. In Blochmanniella floridana, this protein is Large ribosomal subunit protein uL3.